The following is a 462-amino-acid chain: A-type ATP synthase subunit B (462 aa).

This sequence belongs to the ATPase alpha/beta chains family. As to quaternary structure, has multiple subunits with at least A(3), B(3), C, D, E, F, H, I and proteolipid K(x).

Its subcellular location is the cell membrane. Its function is as follows. Component of the A-type ATP synthase that produces ATP from ADP in the presence of a proton gradient across the membrane. The B chain is a regulatory subunit. This is A-type ATP synthase subunit B from Methanococcus maripaludis (strain DSM 14266 / JCM 13030 / NBRC 101832 / S2 / LL).